Here is a 425-residue protein sequence, read N- to C-terminus: (S)-6-hydroxynicotine oxidase (425 aa).

Residues Ser-12, Glu-31, 38 to 39 (GR), and 56 to 59 (GGAY) contribute to the FAD site. Asn-166 contacts (S)-6-hydroxynicotine. Val-226 provides a ligand contact to FAD. (S)-6-hydroxynicotine is bound by residues Tyr-311, Phe-326, and Trp-371. FAD is bound by residues Ser-398 and 406–408 (GYI). A (S)-6-hydroxynicotine-binding site is contributed by Tyr-407.

The protein belongs to the flavin monoamine oxidase family. Homodimer. FAD is required as a cofactor.

It localises to the cytoplasm. The enzyme catalyses (S)-6-hydroxynicotine + O2 + H2O = 6-hydroxypseudooxynicotine + H2O2. It catalyses the reaction (S)-6-hydroxynicotine + O2 = 6-hydroxy-N-methylmyosmine + H2O2. Its pathway is alkaloid degradation; nicotine degradation; 6-hydroxypseudooxynicotine from nicotine (S-isomer route): step 2/2. With respect to regulation, inhibited by (R)-6-hydroxynicotine. Inhibited by high concentrations of phenanthroline. Activity is strongly affected by Hg(2+) and p-chloromercuriphenylsulfonate, but not by N-ethylmaleimide and 5,5'-dithiobis-(2-nitrobenzoate). Involved in the degradation of L-nicotine. Catalyzes the oxidation of (S)-6-hydroxynicotine (6-hydroxy-L-nicotine) to 6-hydroxypseudooxynicotine. Oxidation of the pyrrolidine ring of (S)-6-hydroxynicotine leads to the formation of the optically inactive 6-hydroxy-N-methylmyosmine, which hydrolyzes spontaneously to 6-hydroxypseudooxynicotine. Acts with absolute stereospecificity on the L-form of 6-hydroxynicotine. Can also use (S)-6-hydroxynornicotine. The polypeptide is (S)-6-hydroxynicotine oxidase (Paenarthrobacter nicotinovorans (Arthrobacter nicotinovorans)).